A 307-amino-acid polypeptide reads, in one-letter code: N-acetylmuramic acid 6-phosphate etherase (307 aa).

The SIS domain occupies alanine 60–lysine 223. Catalysis depends on glutamate 88, which acts as the Proton donor. Glutamate 119 is an active-site residue.

This sequence belongs to the GCKR-like family. MurNAc-6-P etherase subfamily. In terms of assembly, homodimer.

It catalyses the reaction N-acetyl-D-muramate 6-phosphate + H2O = N-acetyl-D-glucosamine 6-phosphate + (R)-lactate. It functions in the pathway amino-sugar metabolism; N-acetylmuramate degradation. Specifically catalyzes the cleavage of the D-lactyl ether substituent of MurNAc 6-phosphate, producing GlcNAc 6-phosphate and D-lactate. The protein is N-acetylmuramic acid 6-phosphate etherase of Synechococcus elongatus (strain ATCC 33912 / PCC 7942 / FACHB-805) (Anacystis nidulans R2).